The sequence spans 547 residues: MEPRAPPRLSVSSPRRESGATVPSHSPSTLLSCASSETATEKRRRWTGVLSVFGGVLVHVCLGTVYTWGTLAVYVVSYMRLLQIQSLQAASDASTLLERTSEEDGSSLSVFAFASAPSLVRLSDSAWVLASQFAGMTLGMPLGGIAQKTLGPCRTVILGGALMSLAVGMAPVLLHSYALFVTVFGVIQGVGLGLAYTAPLLCGLAWFPEKKGIVSGAITAGFGTGALLFSPLQAAFLNPLSIAPSQAPYASHPAELYYDVSDSDQLEILLRVPRLFRLLAVCYLLLVSAGAALLRVPAASPGVRTPGASACVFDEEAALVKSLEREEVRDETREEARATVSVRTALVSWTFWSLWTLFFLNGLAICFTASFWRLLAVDRNTRAYILTETQLALVGAAASACNAVGRLAWGHLADKRGFQTSLMGLSALWSLLLFFLPNAAPKGGLCYALAVSGSFFCLGGNFSVFPSAVASVFGPDAIGHLYGFIFGSQLASSLGFAYLTQRVAQTIGTDGLSTLMGLCTALTAMSVFCLPALSPTPRKRHSFQKQS.

The interval Met1–Cys33 is disordered. Topologically, residues Met1–Arg45 are cytoplasmic. The segment covering Thr21 to Cys33 has biased composition (polar residues). A run of 12 helical transmembrane segments spans residues Trp46–Tyr66, Ala126–Ala146, Val167–Ile187, Gly189–Glu209, Gly212–Leu232, Leu278–Ala298, Ala345–Ile365, Ile385–Gly405, Gly417–Pro437, Leu445–Phe465, Ser467–Gly487, and Leu515–Pro535.

This sequence belongs to the major facilitator superfamily. Interacts with apicoplast pyruvate carrier 2.

It localises to the plastid. Its subcellular location is the apicoplast. The protein localises to the membrane. Functionally, along with apicoplast pyruvate carrier 2, forms apicoplast pyruvate carrier (APC) complex, which transports pyruvate into the apicoplast and may also transport amino acids like methionine, serine, glycine and tryptophan with low efficiency. Required for maintaining pyruvate-dependent metabolic activities in the apicoplast, such as synthesis of fatty acids, isopentenyl pyrophosphate (IPP), dimethylallyl pyrophosphate (DMAPP) and methylerythritol 4-phosphate (MEP). Required for maintaining the integrity of the apicoplast. Required for normal parasite growth. The protein is Apicoplast pyruvate carrier 1 of Toxoplasma gondii.